The primary structure comprises 261 residues: Triosephosphate isomerase (261 aa).

10 to 12 (NWK) provides a ligand contact to substrate. Residue histidine 100 is the Electrophile of the active site. The active-site Proton acceptor is glutamate 172. Substrate is bound by residues glycine 178, serine 218, and 239-240 (GG).

It belongs to the triosephosphate isomerase family. Homodimer.

It is found in the cytoplasm. The catalysed reaction is D-glyceraldehyde 3-phosphate = dihydroxyacetone phosphate. It participates in carbohydrate biosynthesis; gluconeogenesis. It functions in the pathway carbohydrate degradation; glycolysis; D-glyceraldehyde 3-phosphate from glycerone phosphate: step 1/1. Its function is as follows. Involved in the gluconeogenesis. Catalyzes stereospecifically the conversion of dihydroxyacetone phosphate (DHAP) to D-glyceraldehyde-3-phosphate (G3P). The sequence is that of Triosephosphate isomerase from Mycobacterium bovis (strain BCG / Pasteur 1173P2).